The chain runs to 306 residues: MISDSIPKELILEIMLRLPAKSIARFHCVSKQWASMLSRPYFTELFLTSSSTQPRLLFAIKRNGLWCFFSLPKHQSPYDNSSSSLVVAADFHMKFLPNKIQMYSSSENRKLSCCYASGLTYFYDMYSEVRVICNPITGRYASLPYLKRYRKELSFFGFDPIDKQFKEWLKYAYSLRDDKFFTHDVFVVRVTATEMNTIQRVEIQGFGECQHEYDYYRSRVVYVFADHVEDLDVNDPKLLESKEEEEEEEEEEEEEEEEEEEEEEEEEEEESKEREKEKKIETVIGGWIKQYWACFLRKSWELNPHR.

The F-box domain maps to 1-45; sequence MISDSIPKELILEIMLRLPAKSIARFHCVSKQWASMLSRPYFTEL. Positions 235–278 are disordered; the sequence is DPKLLESKEEEEEEEEEEEEEEEEEEEEEEEEEEEESKEREKEK. Residues 242-270 show a composition bias toward acidic residues; the sequence is KEEEEEEEEEEEEEEEEEEEEEEEEEEEE.

In Arabidopsis thaliana (Mouse-ear cress), this protein is Putative F-box protein At1g47300.